The sequence spans 169 residues: MFKKSIITHAPIHWLSDEEREEVAENTLSWLLELGSMTRRFEQHCHQVTVMPYQEGFIEYIEPADEQKCLPYSRRYWLREIVLCGDNVPWLLGRTLVPEETLTGEDRQLVNLRTVPLGRYLFQETTLSRDFIHIGQQNGHWLRRSRFQLSDKPLLLTEVFLPASPVYKQ.

Positions 37, 79, 117, and 158 each coordinate substrate.

The protein belongs to the UbiC family. In terms of assembly, monomer.

It is found in the cytoplasm. The catalysed reaction is chorismate = 4-hydroxybenzoate + pyruvate. It participates in cofactor biosynthesis; ubiquinone biosynthesis. In terms of biological role, removes the pyruvyl group from chorismate, with concomitant aromatization of the ring, to provide 4-hydroxybenzoate (4HB) for the ubiquinone pathway. The protein is Chorismate pyruvate-lyase of Proteus mirabilis (strain HI4320).